Consider the following 286-residue polypeptide: MASGKEIKGKIGSIKNTQKITSAMEMVAASKMKKAQERMASGRPYAQNMLKVIGHIANGNLEYRHPYLEEREVKRVGYIVISTDRGLCGGLNTNEFKLVTQDVKKWREQGVEVDFAALGSKACSFFNRFGGKLLAAESGLGDKPSVSDVVGVVRVMLKAYDEGQIDRVFLVFNDFVNTMTQKPVINQLLPLPKSEDEEYQHRWDYIYEPDPKEILEALMVRYIESQVYQGVVENAASEQAARMVAMKAATDNAGNLIDELQLVYNKARQAAITQEISEIVSGAAAV.

The protein belongs to the ATPase gamma chain family. In terms of assembly, F-type ATPases have 2 components, CF(1) - the catalytic core - and CF(0) - the membrane proton channel. CF(1) has five subunits: alpha(3), beta(3), gamma(1), delta(1), epsilon(1). CF(0) has three main subunits: a, b and c.

It is found in the cell inner membrane. Produces ATP from ADP in the presence of a proton gradient across the membrane. The gamma chain is believed to be important in regulating ATPase activity and the flow of protons through the CF(0) complex. In Alteromonas mediterranea (strain DSM 17117 / CIP 110805 / LMG 28347 / Deep ecotype), this protein is ATP synthase gamma chain.